The chain runs to 100 residues: Urease subunit gamma (100 aa).

The protein belongs to the urease gamma subunit family. As to quaternary structure, heterotrimer of UreA (gamma), UreB (beta) and UreC (alpha) subunits. Three heterotrimers associate to form the active enzyme.

It localises to the cytoplasm. It catalyses the reaction urea + 2 H2O + H(+) = hydrogencarbonate + 2 NH4(+). The protein operates within nitrogen metabolism; urea degradation; CO(2) and NH(3) from urea (urease route): step 1/1. In Pseudomonas putida (strain ATCC 700007 / DSM 6899 / JCM 31910 / BCRC 17059 / LMG 24140 / F1), this protein is Urease subunit gamma.